The sequence spans 85 residues: MARLTLDGLRTILVACAGEDDGVDLSGDILDITFEELGYDSLALMESASRIERELGVALADGDINEELTPRVLLDLVNGAQAEAA.

The Carrier domain occupies 3 to 81; sequence RLTLDGLRTI…VLLDLVNGAQ (79 aa). The residue at position 41 (Ser-41) is an O-(pantetheine 4'-phosphoryl)serine.

Post-translationally, 4'-phosphopantetheine is transferred from CoA to a specific serine of the apo-ACP-like protein.

Its pathway is antibiotic biosynthesis; granaticin biosynthesis. Its function is as follows. Acyl carrier protein. The protein is Granaticin polyketide synthase acyl carrier protein of Streptomyces violaceoruber.